The following is a 91-amino-acid chain: CRISPR-associated endoribonuclease Cas2 2 (91 aa).

Residue Asp-6 participates in Mg(2+) binding.

Belongs to the CRISPR-associated endoribonuclease Cas2 protein family. Homodimer, forms a heterotetramer with a Cas1 homodimer. It depends on Mg(2+) as a cofactor.

Functionally, CRISPR (clustered regularly interspaced short palindromic repeat), is an adaptive immune system that provides protection against mobile genetic elements (viruses, transposable elements and conjugative plasmids). CRISPR clusters contain sequences complementary to antecedent mobile elements and target invading nucleic acids. CRISPR clusters are transcribed and processed into CRISPR RNA (crRNA). Functions as a ssRNA-specific endoribonuclease. Involved in the integration of spacer DNA into the CRISPR cassette. In Moorella thermoacetica (strain ATCC 39073 / JCM 9320), this protein is CRISPR-associated endoribonuclease Cas2 2.